The primary structure comprises 148 residues: Nucleoside diphosphate kinase (148 aa).

The ATP site is built by lysine 9, phenylalanine 57, arginine 85, threonine 91, arginine 102, and asparagine 112. Position 91 is a phosphothreonine (threonine 91). Residue histidine 115 is the Pros-phosphohistidine intermediate of the active site. Phosphoserine is present on serine 122.

It belongs to the NDK family. Homotetramer. It depends on Mg(2+) as a cofactor.

Its subcellular location is the cytoplasm. The catalysed reaction is a 2'-deoxyribonucleoside 5'-diphosphate + ATP = a 2'-deoxyribonucleoside 5'-triphosphate + ADP. It carries out the reaction a ribonucleoside 5'-diphosphate + ATP = a ribonucleoside 5'-triphosphate + ADP. Major role in the synthesis of nucleoside triphosphates other than ATP. The ATP gamma phosphate is transferred to the NDP beta phosphate via a ping-pong mechanism, using a phosphorylated active-site intermediate. In Bacillus licheniformis (strain ATCC 14580 / DSM 13 / JCM 2505 / CCUG 7422 / NBRC 12200 / NCIMB 9375 / NCTC 10341 / NRRL NRS-1264 / Gibson 46), this protein is Nucleoside diphosphate kinase.